The chain runs to 342 residues: Isopentenyl-diphosphate delta-isomerase (342 aa).

6 to 7 (RK) is a substrate binding site. FMN-binding positions include S63, 64–66 (SMT), S94, and N122. Residue 94-96 (SMR) participates in substrate binding. Q157 is a substrate binding site. E158 is a binding site for Mg(2+). FMN-binding positions include K189, T219, 269–271 (GLK), and 290–291 (AG).

The protein belongs to the IPP isomerase type 2 family. Homooctamer. Dimer of tetramers. Requires FMN as cofactor. It depends on NADPH as a cofactor. The cofactor is Mg(2+).

It is found in the cytoplasm. It carries out the reaction isopentenyl diphosphate = dimethylallyl diphosphate. Its function is as follows. Involved in the biosynthesis of isoprenoids. Catalyzes the 1,3-allylic rearrangement of the homoallylic substrate isopentenyl (IPP) to its allylic isomer, dimethylallyl diphosphate (DMAPP). In Rickettsia bellii (strain RML369-C), this protein is Isopentenyl-diphosphate delta-isomerase.